A 545-amino-acid polypeptide reads, in one-letter code: CTP synthase (545 aa).

Residues 1–266 are amidoligase domain; the sequence is MTKNYIFITG…DDYICNYFKL (266 aa). CTP is bound at residue Ser14. Residue Ser14 coordinates UTP. Residues 15-20 and Asp72 contribute to the ATP site; that span reads SLGKGI. Residues Asp72 and Glu140 each coordinate Mg(2+). Residues 147–149, 187–192, and Lys223 contribute to the CTP site; these read DIE and KTKPTQ. Residues 187–192 and Lys223 each bind UTP; that span reads KTKPTQ. 239–241 is an ATP binding site; it reads KDV. Positions 291–543 constitute a Glutamine amidotransferase type-1 domain; that stretch reads VIGIIGKYIK…IKSAGKHKKN (253 aa). Gly352 lines the L-glutamine pocket. Catalysis depends on Cys379, which acts as the Nucleophile; for glutamine hydrolysis. Residues 380–383, Glu403, and Arg471 each bind L-glutamine; that span reads LGMQ. Catalysis depends on residues His516 and Glu518.

Belongs to the CTP synthase family. As to quaternary structure, homotetramer.

It catalyses the reaction UTP + L-glutamine + ATP + H2O = CTP + L-glutamate + ADP + phosphate + 2 H(+). The enzyme catalyses L-glutamine + H2O = L-glutamate + NH4(+). It carries out the reaction UTP + NH4(+) + ATP = CTP + ADP + phosphate + 2 H(+). Its pathway is pyrimidine metabolism; CTP biosynthesis via de novo pathway; CTP from UDP: step 2/2. Allosterically activated by GTP, when glutamine is the substrate; GTP has no effect on the reaction when ammonia is the substrate. The allosteric effector GTP functions by stabilizing the protein conformation that binds the tetrahedral intermediate(s) formed during glutamine hydrolysis. Inhibited by the product CTP, via allosteric rather than competitive inhibition. Its function is as follows. Catalyzes the ATP-dependent amination of UTP to CTP with either L-glutamine or ammonia as the source of nitrogen. Regulates intracellular CTP levels through interactions with the four ribonucleotide triphosphates. The chain is CTP synthase from Buchnera aphidicola subsp. Acyrthosiphon pisum (strain Tuc7).